A 400-amino-acid chain; its full sequence is Elongation factor Tu (400 aa).

The 200-residue stretch at Lys10–Glu209 folds into the tr-type G domain. A G1 region spans residues Gly19–Thr26. Gly19–Thr26 serves as a coordination point for GTP. Position 26 (Thr26) interacts with Mg(2+). Residues Gly60 to Ser64 are G2. The interval Asp81–Gly84 is G3. Residues Asp81 to His85 and Asn136 to Asp139 contribute to the GTP site. The G4 stretch occupies residues Asn136 to Asp139. Residues Ser174 to Leu176 form a G5 region.

Belongs to the TRAFAC class translation factor GTPase superfamily. Classic translation factor GTPase family. EF-Tu/EF-1A subfamily. Monomer.

The protein localises to the cytoplasm. It carries out the reaction GTP + H2O = GDP + phosphate + H(+). GTP hydrolase that promotes the GTP-dependent binding of aminoacyl-tRNA to the A-site of ribosomes during protein biosynthesis. In Desulfitobacterium hafniense (strain DSM 10664 / DCB-2), this protein is Elongation factor Tu.